A 533-amino-acid chain; its full sequence is RNA end formation protein 2 (533 aa).

Disordered regions lie at residues 187 to 254, 260 to 279, and 321 to 344; these read SNST…SSMK, LFNK…SKKK, and SSST…PLKK. Positions 206 to 222 are enriched in basic and acidic residues; it reads KIKDSEKEKEKEKDKSK. The segment covering 242–252 has biased composition (low complexity); the sequence is SSPSPTASTSS. The span at 321–338 shows a compositional bias: low complexity; sequence SSSTSGSSTTTVATPASS.

In terms of assembly, interacts with FIR1. Component of the cleavage and polyadenylation factor (CPF) complex, which is composed of PTI1, SYC1, SSU72, GLC7, MPE1, REF2, PFS2, PTA1, YSH1/BRR5, SWD2, CFT2/YDH1, YTH1, CFT1/YHH1, FIP1 and PAP1. Component of the APT complex, which is a subcomplex of CPF, and is composed of PTI1, SYC1, SSU72, GLC7, REF2, PTA1 and SWD2.

Its subcellular location is the nucleus. Functionally, RNA-binding component of the cleavage and polyadenylation factor (CPF) complex, which plays a key role in polyadenylation-dependent pre-mRNA 3'-end formation and cooperates with cleavage factors including the CFIA complex and NAB4/CFIB. Negative regulator of poly(A) synthesis. Component of the APT complex, which may be involved in polyadenylation-independent transcript 3'-end formation. REF2 is required for 3'-end formation of snoRNAs. The polypeptide is RNA end formation protein 2 (REF2) (Saccharomyces cerevisiae (strain ATCC 204508 / S288c) (Baker's yeast)).